The following is an 837-amino-acid chain: Protein translocase subunit SecA 1 (837 aa).

ATP-binding positions include Gln85, 103-107 (GEGKT), and Asp492. A compositionally biased stretch (basic and acidic residues) spans 787-806 (QEVAKGEAVHPKEDGEEPKK). Residues 787–813 (QEVAKGEAVHPKEDGEEPKKKPIRKAV) form a disordered region. The Zn(2+) site is built by Cys821, Cys823, Cys832, and Cys833.

Belongs to the SecA family. In terms of assembly, monomer and homodimer. Part of the essential Sec protein translocation apparatus which comprises SecA, SecYEG and auxiliary proteins SecDF. Other proteins may also be involved. Requires Zn(2+) as cofactor.

It is found in the cell membrane. The protein localises to the cytoplasm. The enzyme catalyses ATP + H2O + cellular proteinSide 1 = ADP + phosphate + cellular proteinSide 2.. In terms of biological role, part of the Sec protein translocase complex. Interacts with the SecYEG preprotein conducting channel. Has a central role in coupling the hydrolysis of ATP to the transfer of proteins into and across the cell membrane, serving as an ATP-driven molecular motor driving the stepwise translocation of polypeptide chains across the membrane. This Geobacillus thermodenitrificans (strain NG80-2) protein is Protein translocase subunit SecA 1.